The sequence spans 457 residues: Peptidyl-prolyl cis-trans isomerase FKBP5 (457 aa).

N-acetylmethionine is present on Met1. Residues 1 to 11 (MTTDEGAKNSR) show a composition bias toward basic and acidic residues. Positions 1–27 (MTTDEGAKNSRENPTATVAEQGEDVTS) are disordered. N6-acetyllysine is present on Lys28. PPIase FKBP-type domains follow at residues 50–138 (GDKV…LDFK) and 165–251 (GARV…KSFE). TPR repeat units follow at residues 268–301 (AAIV…LEME), 317–350 (LAAF…DSAN), and 351–384 (EKGL…NPQN). The disordered stretch occupies residues 423–457 (EEANKAMSKKTSEGVTNEKLAVSHAVEEEKPEGHV). At Ser445 the chain carries Phosphoserine. Residues 447–457 (AVEEEKPEGHV) show a composition bias toward basic and acidic residues.

In terms of assembly, part of a heteromultimeric cytoplasmic complex with HSP90AA1, HSPA1A/HSPA1B and steroid receptors. Upon ligand binding dissociates from the complex and FKBP4 takes its place. Interacts with functionally mature heterooligomeric progesterone receptor complexes along with HSP90 and TEBP. Interacts with NR3C1. Interacts with Akt/AKT1 and PHLPP1; enhancing dephosphorylation and subsequent activation of Akt/AKT1. Interacts with IFI44L; this interaction modulates the kinase activity of IKBKB and IKBKE. Interacts with IKBKB and IKBKE. Acetylation impairs ability to promote interaction between Akt/AKT1 and PHLPP1. Deacetylation by SIRT7 promotes interaction between Akt/AKT1 and PHLPP1, leading to suppress Akt/AKT1 activation. Post-translationally, ubiquitinated, leading to degradation in a proteasome-dependent manner. Deubiquitinated by USP49, leading to stabilization.

It is found in the cytoplasm. Its subcellular location is the nucleus. The catalysed reaction is [protein]-peptidylproline (omega=180) = [protein]-peptidylproline (omega=0). Its activity is regulated as follows. Inhibited by both FK506 and rapamycin. Functionally, immunophilin protein with PPIase and co-chaperone activities. Component of unligated steroid receptors heterocomplexes through interaction with heat-shock protein 90 (HSP90). Plays a role in the intracellular trafficking of heterooligomeric forms of steroid hormone receptors maintaining the complex into the cytoplasm when unliganded. Acts as a regulator of Akt/AKT1 activity by promoting the interaction between Akt/AKT1 and PHLPP1, thereby enhancing dephosphorylation and subsequent activation of Akt/AKT1. Interacts with IKBKE and IKBKB which facilitates IKK complex assembly leading to increased IKBKE and IKBKB kinase activity, NF-kappaB activation, and IFN production. The sequence is that of Peptidyl-prolyl cis-trans isomerase FKBP5 (FKBP5) from Aotus nancymaae (Ma's night monkey).